A 351-amino-acid polypeptide reads, in one-letter code: Methylthioribose-1-phosphate isomerase (351 aa).

Residues 51–53 (RGA), Arg-94, and Gln-199 contribute to the substrate site. The active-site Proton donor is Asp-240. Position 250–251 (250–251 (NK)) interacts with substrate.

This sequence belongs to the EIF-2B alpha/beta/delta subunits family. MtnA subfamily. Homodimer.

The catalysed reaction is 5-(methylsulfanyl)-alpha-D-ribose 1-phosphate = 5-(methylsulfanyl)-D-ribulose 1-phosphate. The protein operates within amino-acid biosynthesis; L-methionine biosynthesis via salvage pathway; L-methionine from S-methyl-5-thio-alpha-D-ribose 1-phosphate: step 1/6. Catalyzes the interconversion of methylthioribose-1-phosphate (MTR-1-P) into methylthioribulose-1-phosphate (MTRu-1-P). In Bacillus thuringiensis subsp. konkukian (strain 97-27), this protein is Methylthioribose-1-phosphate isomerase.